A 174-amino-acid polypeptide reads, in one-letter code: Frataxin homolog, mitochondrial (174 aa).

A mitochondrion-targeting transit peptide spans 1 to 21 (MIKRSLASLVRVSSVMGRRYM).

This sequence belongs to the frataxin family. In terms of assembly, monomer. Forms a 24-mer complex made up of 8 copies of a trimeric subcomplex. Increments in mitochondrial iron uptake induce stepwise assembly of species ranging from trimers to 24-mers. Interacts with ISU1 with a 1 to 1 stoichiometry; the interaction is direct. Interacts with YHB1, SDH1, SDH2, AIM45 and CIR1. Processed in two steps by mitochondrial processing peptidase (MPP). MPP first cleaves the precursor to intermediate form and subsequently converts the intermediate to mature size protein.

The protein resides in the mitochondrion matrix. It catalyses the reaction 4 Fe(2+) + O2 + 4 H(+) = 4 Fe(3+) + 2 H2O. Its function is as follows. Promotes the biosynthesis of heme as well as the assembly and repair of iron-sulfur clusters by delivering Fe(2+) to proteins involved in these pathways. Plays a role in the protection against iron-catalyzed oxidative stress through its ability to catalyze the oxidation of Fe(2+) to Fe(3+). Can store large amounts of the metal in the form of a ferrihydrite mineral by oligomerization. May be involved in regulation of the mitochondrial electron transport chain. In Saccharomyces cerevisiae (strain ATCC 204508 / S288c) (Baker's yeast), this protein is Frataxin homolog, mitochondrial.